The following is an 886-amino-acid chain: Valine--tRNA ligase (886 aa).

The 'HIGH' region motif lies at 53-63 (PNVTGSLHMGH). The 'KMSKS' region signature appears at 540–544 (KMSKS). Lysine 543 serves as a coordination point for ATP. Residues 820 to 851 (IDVAAERRRMEKDLAAAQKELASTAAKLANAD) are a coiled coil.

It belongs to the class-I aminoacyl-tRNA synthetase family. ValS type 1 subfamily. Monomer.

The protein resides in the cytoplasm. The catalysed reaction is tRNA(Val) + L-valine + ATP = L-valyl-tRNA(Val) + AMP + diphosphate. Its function is as follows. Catalyzes the attachment of valine to tRNA(Val). As ValRS can inadvertently accommodate and process structurally similar amino acids such as threonine, to avoid such errors, it has a 'posttransfer' editing activity that hydrolyzes mischarged Thr-tRNA(Val) in a tRNA-dependent manner. This Mycobacterium leprae (strain TN) protein is Valine--tRNA ligase.